The sequence spans 87 residues: U24 protein (87 aa).

Thr-6 carries the phosphothreonine modification. The PPXY motif signature appears at 8–11; it reads PPSY. The chain crosses the membrane as a helical span at residues 59-79; the sequence is FLVLTGLAIAMILFIVFVLYV.

In terms of assembly, interacts with host ITCH; this interaction probably mediates ITCH degradation. Interacts probably with NEDD4.

The protein resides in the membrane. Its function is as follows. Down-regulates the TCR/CD3E complex and the transferrin receptor TFRC in host T-cells by blocking them from recycling back to the cell surface. The protein is U24 protein (U24) of Homo sapiens (Human).